A 432-amino-acid chain; its full sequence is Trigger factor (432 aa).

The PPIase FKBP-type domain occupies 161–246; the sequence is GTRATINFVG…VVKVEARELP (86 aa).

Belongs to the FKBP-type PPIase family. Tig subfamily.

Its subcellular location is the cytoplasm. It catalyses the reaction [protein]-peptidylproline (omega=180) = [protein]-peptidylproline (omega=0). Involved in protein export. Acts as a chaperone by maintaining the newly synthesized protein in an open conformation. Functions as a peptidyl-prolyl cis-trans isomerase. The protein is Trigger factor of Aliivibrio salmonicida (strain LFI1238) (Vibrio salmonicida (strain LFI1238)).